The sequence spans 641 residues: Macrolide export ATP-binding/permease protein MacB (641 aa).

In terms of domain architecture, ABC transporter spans 2 to 236; the sequence is IFLKNICKNI…LTLKTMSKEK (235 aa). 34 to 41 is an ATP binding site; the sequence is GQSGSGKT. A run of 4 helical transmembrane segments spans residues 265-285, 519-539, 571-591, and 604-624; these read ILTM…VALG, ACVA…IMLV, MICT…IFAF, and AYSV…FGFF.

Belongs to the ABC transporter superfamily. Macrolide exporter (TC 3.A.1.122) family. As to quaternary structure, homodimer.

The protein resides in the cell inner membrane. Functionally, non-canonical ABC transporter that contains transmembrane domains (TMD), which form a pore in the inner membrane, and an ATP-binding domain (NBD), which is responsible for energy generation. Confers resistance against macrolides. The polypeptide is Macrolide export ATP-binding/permease protein MacB (Campylobacter jejuni subsp. jejuni serotype O:23/36 (strain 81-176)).